The chain runs to 1036 residues: Cellulose synthase-like protein D1 (1036 aa).

The interval 1 to 99 is disordered; it reads MASSPPKKTL…GGGDGPKMGN (99 aa). 2 stretches are compositionally biased toward polar residues: residues 9-19 and 69-80; these read TLNSQSSSLSR and NQPAGSSGSTSE. Positions 86–95 are enriched in gly residues; the sequence is NRGGGGGDGP. A run of 2 helical transmembrane segments spans residues 178 to 198 and 208 to 228; these read ILSP…FFLW and AMWL…SWIL. D308 is a catalytic residue. The disordered stretch occupies residues 626-665; the sequence is AMHVRTQSQASQTSQASDLESDTQPLNDDPDLGLPKKFGN. Over residues 631–642 the composition is skewed to low complexity; that stretch reads TQSQASQTSQAS. The active site involves D741. The next 6 helical transmembrane spans lie at 817-837, 848-868, 895-915, 938-958, 962-982, and 1002-1022; these read IYPF…LCLF, IHFL…SLLE, LAAV…SFTL, GLFI…VIGA, IYSV…SLWV, and TIVY…WITI.

The protein belongs to the glycosyltransferase 2 family. Plant cellulose synthase-like D subfamily.

The protein resides in the golgi apparatus membrane. In terms of biological role, thought to be a Golgi-localized beta-glycan synthase that polymerize the backbones of noncellulosic polysaccharides (hemicelluloses) of plant cell wall. The protein is Cellulose synthase-like protein D1 (CSLD1) of Arabidopsis thaliana (Mouse-ear cress).